Here is a 259-residue protein sequence, read N- to C-terminus: Small ribosomal subunit protein eS1 (259 aa).

It belongs to the eukaryotic ribosomal protein eS1 family. Component of the small ribosomal subunit. Mature ribosomes consist of a small (40S) and a large (60S) subunit. The 40S subunit contains about 33 different proteins and 1 molecule of RNA (18S). The 60S subunit contains about 49 different proteins and 3 molecules of RNA (25S, 5.8S and 5S).

Its subcellular location is the cytoplasm. This Monosiga brevicollis (Choanoflagellate) protein is Small ribosomal subunit protein eS1.